Consider the following 192-residue polypeptide: Large ribosomal subunit protein uL24c (192 aa).

Residues 1–47 (MAAMAALQSSFTSLSLSSNSFLGQRLFPSPTTLQVKTEGHSPCLIVM) constitute a chloroplast transit peptide.

In terms of assembly, component of the chloroplast large ribosomal subunit (LSU). Mature 70S chloroplast ribosomes of higher plants consist of a small (30S) and a large (50S) subunit. The 30S small subunit contains 1 molecule of ribosomal RNA (16S rRNA) and 24 different proteins. The 50S large subunit contains 3 rRNA molecules (23S, 5S and 4.5S rRNA) and 33 different proteins.

The protein resides in the plastid. It localises to the chloroplast. Functionally, component of the chloroplast ribosome (chloro-ribosome), a dedicated translation machinery responsible for the synthesis of chloroplast genome-encoded proteins, including proteins of the transcription and translation machinery and components of the photosynthetic apparatus. The polypeptide is Large ribosomal subunit protein uL24c (RPL24) (Spinacia oleracea (Spinach)).